A 510-amino-acid chain; its full sequence is Propionyl-CoA carboxylase beta chain (510 aa).

The CoA carboxyltransferase N-terminal domain occupies 1–257 (MKDILQELEN…SNRTPAPVRP (257 aa)). Residues 1 to 504 (MKDILQELEN…NKKLANPWKK (504 aa)) form a carboxyltransferase region. The CoA carboxyltransferase C-terminal domain occupies 264-504 (RIEDSLDTLI…NKKLANPWKK (241 aa)).

It belongs to the AccD/PCCB family. In terms of assembly, probably a dodecamer composed of six biotin-containing alpha subunits and six beta subunits.

It catalyses the reaction propanoyl-CoA + hydrogencarbonate + ATP = (S)-methylmalonyl-CoA + ADP + phosphate + H(+). It participates in metabolic intermediate metabolism; propanoyl-CoA degradation; succinyl-CoA from propanoyl-CoA: step 1/3. The polypeptide is Propionyl-CoA carboxylase beta chain (Cereibacter sphaeroides (strain ATCC 17023 / DSM 158 / JCM 6121 / CCUG 31486 / LMG 2827 / NBRC 12203 / NCIMB 8253 / ATH 2.4.1.) (Rhodobacter sphaeroides)).